The chain runs to 118 residues: Large ribosomal subunit protein uL24 (118 aa).

Positions 1–24 (MSEQPHKQRTRTKRASLHEKQDQV) are disordered.

Belongs to the universal ribosomal protein uL24 family. In terms of assembly, part of the 50S ribosomal subunit.

One of two assembly initiator proteins, it binds directly to the 5'-end of the 23S rRNA, where it nucleates assembly of the 50S subunit. In terms of biological role, located at the polypeptide exit tunnel on the outside of the subunit. The polypeptide is Large ribosomal subunit protein uL24 (Halobacterium salinarum (strain ATCC 700922 / JCM 11081 / NRC-1) (Halobacterium halobium)).